Reading from the N-terminus, the 331-residue chain is LIM/homeobox protein Lhx9 (331 aa).

LIM zinc-binding domains are found at residues 71–132 (TLCA…FSVK) and 133–194 (RCAR…LVQG). A disordered region spans residues 253–275 (ETDLDRDQTYPPSQKTKRMRTSF). Residues 268 to 327 (TKRMRTSFKHHQLRTMKSYFAINHNPDAKDLKQLAQKTGLTKRVLQGEQCSGFNSHTTRR) constitute a DNA-binding region (homeobox).

It localises to the nucleus. May be involved in gonadal development. The chain is LIM/homeobox protein Lhx9 (lhx9) from Xenopus laevis (African clawed frog).